Consider the following 431-residue polypeptide: Trigger factor (431 aa).

In terms of domain architecture, PPIase FKBP-type spans Glu-160–Pro-245.

The protein belongs to the FKBP-type PPIase family. Tig subfamily.

The protein localises to the cytoplasm. The enzyme catalyses [protein]-peptidylproline (omega=180) = [protein]-peptidylproline (omega=0). In terms of biological role, involved in protein export. Acts as a chaperone by maintaining the newly synthesized protein in an open conformation. Functions as a peptidyl-prolyl cis-trans isomerase. The protein is Trigger factor of Actinobacillus succinogenes (strain ATCC 55618 / DSM 22257 / CCUG 43843 / 130Z).